A 137-amino-acid polypeptide reads, in one-letter code: Small heat shock protein IbpA (137 aa).

The 110-residue stretch at 28–137 (NQSNGGYPPY…SLKPRRIEIK (110 aa)) folds into the sHSP domain.

The protein belongs to the small heat shock protein (HSP20) family. In terms of assembly, monomer. Forms homomultimers of about 100-150 subunits at optimal growth temperatures. Conformation changes to monomers at high temperatures or high ionic concentrations.

Its subcellular location is the cytoplasm. In terms of biological role, associates with aggregated proteins, together with IbpB, to stabilize and protect them from irreversible denaturation and extensive proteolysis during heat shock and oxidative stress. Aggregated proteins bound to the IbpAB complex are more efficiently refolded and reactivated by the ATP-dependent chaperone systems ClpB and DnaK/DnaJ/GrpE. Its activity is ATP-independent. The polypeptide is Small heat shock protein IbpA (Yersinia pseudotuberculosis serotype O:1b (strain IP 31758)).